The sequence spans 367 residues: Phospho-N-acetylmuramoyl-pentapeptide-transferase (367 aa).

Transmembrane regions (helical) follow at residues 27-47 (VLAA…VIRW), 73-93 (TMGG…WGDL), 97-117 (YVWT…YDDW), 132-152 (WKFF…AFSA), 167-187 (TMAY…VIVG), 200-220 (GLAI…AYVT), 237-257 (AGEL…FLWF), 264-284 (VFMG…VAVI), 289-309 (IVLL…MLQV), and 344-364 (QVVV…LSTL).

Belongs to the glycosyltransferase 4 family. MraY subfamily. Mg(2+) is required as a cofactor.

It is found in the cell inner membrane. The catalysed reaction is UDP-N-acetyl-alpha-D-muramoyl-L-alanyl-gamma-D-glutamyl-meso-2,6-diaminopimeloyl-D-alanyl-D-alanine + di-trans,octa-cis-undecaprenyl phosphate = di-trans,octa-cis-undecaprenyl diphospho-N-acetyl-alpha-D-muramoyl-L-alanyl-D-glutamyl-meso-2,6-diaminopimeloyl-D-alanyl-D-alanine + UMP. It functions in the pathway cell wall biogenesis; peptidoglycan biosynthesis. Its function is as follows. Catalyzes the initial step of the lipid cycle reactions in the biosynthesis of the cell wall peptidoglycan: transfers peptidoglycan precursor phospho-MurNAc-pentapeptide from UDP-MurNAc-pentapeptide onto the lipid carrier undecaprenyl phosphate, yielding undecaprenyl-pyrophosphoryl-MurNAc-pentapeptide, known as lipid I. This Dechloromonas aromatica (strain RCB) protein is Phospho-N-acetylmuramoyl-pentapeptide-transferase.